We begin with the raw amino-acid sequence, 516 residues long: Cytochrome P450 1A2 (516 aa).

Residue serine 69 is glycosylated (O-linked (GlcNAc) serine). Phenylalanine 226 serves as a coordination point for substrate. A heme-binding site is contributed by cysteine 458.

This sequence belongs to the cytochrome P450 family. In terms of assembly, interacts with PGRMC1; the interaction requires PGRMC1 homodimerization. Heme serves as cofactor.

The protein resides in the endoplasmic reticulum membrane. The protein localises to the microsome membrane. The enzyme catalyses an organic molecule + reduced [NADPH--hemoprotein reductase] + O2 = an alcohol + oxidized [NADPH--hemoprotein reductase] + H2O + H(+). It carries out the reaction 17beta-estradiol + reduced [NADPH--hemoprotein reductase] + O2 = 2-hydroxy-17beta-estradiol + oxidized [NADPH--hemoprotein reductase] + H2O + H(+). It catalyses the reaction 17beta-estradiol + reduced [NADPH--hemoprotein reductase] + O2 = 4-hydroxy-17beta-estradiol + oxidized [NADPH--hemoprotein reductase] + H2O + H(+). The catalysed reaction is estrone + reduced [NADPH--hemoprotein reductase] + O2 = 2-hydroxyestrone + oxidized [NADPH--hemoprotein reductase] + H2O + H(+). The enzyme catalyses estrone + reduced [NADPH--hemoprotein reductase] + O2 = 4-hydroxyestrone + oxidized [NADPH--hemoprotein reductase] + H2O + H(+). It carries out the reaction cholesterol + reduced [NADPH--hemoprotein reductase] + O2 = 25-hydroxycholesterol + oxidized [NADPH--hemoprotein reductase] + H2O + H(+). It catalyses the reaction all-trans-retinol + reduced [NADPH--hemoprotein reductase] + O2 = all-trans-retinal + oxidized [NADPH--hemoprotein reductase] + 2 H2O + H(+). The catalysed reaction is all-trans-retinal + reduced [NADPH--hemoprotein reductase] + O2 = all-trans-retinoate + oxidized [NADPH--hemoprotein reductase] + H2O + 2 H(+). The enzyme catalyses (5Z,8Z,11Z,14Z)-eicosatetraenoate + reduced [NADPH--hemoprotein reductase] + O2 = (14R,15S)-epoxy-(5Z,8Z,11Z)-eicosatrienoate + oxidized [NADPH--hemoprotein reductase] + H2O + H(+). It carries out the reaction (5Z,8Z,11Z,14Z)-eicosatetraenoate + reduced [NADPH--hemoprotein reductase] + O2 = (14S,15R)-epoxy-(5Z,8Z,11Z)-eicosatrienoate + oxidized [NADPH--hemoprotein reductase] + H2O + H(+). It catalyses the reaction (5Z,8Z,11Z,14Z,17Z)-eicosapentaenoate + reduced [NADPH--hemoprotein reductase] + O2 = (17R,18S)-epoxy-(5Z,8Z,11Z,14Z)-eicosatetraenoate + oxidized [NADPH--hemoprotein reductase] + H2O + H(+). The catalysed reaction is (4Z,7Z,10Z,13Z,16Z,19Z)-docosahexaenoate + reduced [NADPH--hemoprotein reductase] + O2 = (19R,20S)-epoxy-(4Z,7Z,10Z,13Z,16Z)-docosapentaenoate + oxidized [NADPH--hemoprotein reductase] + H2O + H(+). The enzyme catalyses (5S)-hydroperoxy-(6E,8Z,11Z,14Z)-eicosatetraenoate = 5-oxo-(6E,8Z,11Z,14Z)-eicosatetraenoate + H2O. It carries out the reaction (12S)-hydroperoxy-(5Z,8Z,10E,14Z)-eicosatetraenoate = 12-oxo-(5Z,8Z,10E,14Z)-eicosatetraenoate + H2O. It catalyses the reaction (15S)-hydroperoxy-(5Z,8Z,11Z,13E)-eicosatetraenoate = 15-oxo-(5Z,8Z,11Z,13E)-eicosatetraenoate + H2O. The catalysed reaction is (13S)-hydroperoxy-(9Z,11E)-octadecadienoate = 13-oxo-(9Z,11E)-octadecadienoate + H2O. The enzyme catalyses (5Z,8Z,11Z,14Z)-eicosatetraenoate + reduced [NADPH--hemoprotein reductase] + O2 = 13-hydroxy-(5Z,8Z,11Z,14Z)-eicosatetraenoate + oxidized [NADPH--hemoprotein reductase] + H2O + H(+). It carries out the reaction (5Z,8Z,11Z,14Z)-eicosatetraenoate + reduced [NADPH--hemoprotein reductase] + O2 = 19-hydroxy-(5Z,8Z,11Z,14Z)-eicosatetraenoate + oxidized [NADPH--hemoprotein reductase] + H2O + H(+). It catalyses the reaction (9Z,12Z)-octadecadienoate + reduced [NADPH--hemoprotein reductase] + O2 = 11-hydroxy-(9Z,12Z)-octadecadienoate + oxidized [NADPH--hemoprotein reductase] + H2O + H(+). Its pathway is cofactor metabolism; retinol metabolism. The protein operates within steroid metabolism; cholesterol metabolism. It participates in lipid metabolism; arachidonate metabolism. Functionally, a cytochrome P450 monooxygenase involved in the metabolism of various endogenous substrates, including fatty acids, steroid hormones and vitamins. Mechanistically, uses molecular oxygen inserting one oxygen atom into a substrate, and reducing the second into a water molecule, with two electrons provided by NADPH via cytochrome P450 reductase (NADPH--hemoprotein reductase). Catalyzes the hydroxylation of carbon-hydrogen bonds. Exhibits high catalytic activity for the formation of hydroxyestrogens from estrone (E1) and 17beta-estradiol (E2), namely 2-hydroxy E1 and E2. Metabolizes cholesterol toward 25-hydroxycholesterol, a physiological regulator of cellular cholesterol homeostasis. May act as a major enzyme for all-trans retinoic acid biosynthesis in the liver. Catalyzes two successive oxidative transformation of all-trans retinol to all-trans retinal and then to the active form all-trans retinoic acid. Primarily catalyzes stereoselective epoxidation of the last double bond of polyunsaturated fatty acids (PUFA), displaying a strong preference for the (R,S) stereoisomer. Catalyzes bisallylic hydroxylation and omega-1 hydroxylation of PUFA. May also participate in eicosanoids metabolism by converting hydroperoxide species into oxo metabolites (lipoxygenase-like reaction, NADPH-independent). Plays a role in the oxidative metabolism of xenobiotics. Catalyzes the N-hydroxylation of heterocyclic amines and the O-deethylation of phenacetin. Metabolizes caffeine via N3-demethylation. The chain is Cytochrome P450 1A2 (CYP1A2) from Callithrix jacchus (White-tufted-ear marmoset).